We begin with the raw amino-acid sequence, 308 residues long: Glutaminase (308 aa).

Substrate-binding residues include Ser66, Asn117, Glu161, Asn168, Tyr192, Tyr244, and Val262.

Belongs to the glutaminase family. As to quaternary structure, homotetramer.

The catalysed reaction is L-glutamine + H2O = L-glutamate + NH4(+). The polypeptide is Glutaminase (Enterobacter sp. (strain 638)).